The primary structure comprises 138 residues: Nucleoside diphosphate kinase (138 aa).

The ATP site is built by K9, F57, R85, T91, R102, and N112. H120 (pros-phosphohistidine intermediate) is an active-site residue.

This sequence belongs to the NDK family. As to quaternary structure, homotetramer. Mg(2+) serves as cofactor.

Its subcellular location is the cytoplasm. The catalysed reaction is a 2'-deoxyribonucleoside 5'-diphosphate + ATP = a 2'-deoxyribonucleoside 5'-triphosphate + ADP. It carries out the reaction a ribonucleoside 5'-diphosphate + ATP = a ribonucleoside 5'-triphosphate + ADP. Functionally, major role in the synthesis of nucleoside triphosphates other than ATP. The ATP gamma phosphate is transferred to the NDP beta phosphate via a ping-pong mechanism, using a phosphorylated active-site intermediate. This is Nucleoside diphosphate kinase from Streptococcus agalactiae serotype III (strain NEM316).